A 394-amino-acid polypeptide reads, in one-letter code: Glycerol-1-phosphate dehydrogenase [NAD(P)+] (394 aa).

Residues Asp-54, 116-120 (GTIHD), and 138-141 (TAPS) contribute to the NAD(+) site. Asp-143 serves as a coordination point for substrate. Ser-147 serves as a coordination point for NAD(+). Asp-190 provides a ligand contact to substrate. 2 residues coordinate Ni(2+): Asp-190 and His-270. Residue His-274 coordinates substrate. A Ni(2+)-binding site is contributed by His-290.

Belongs to the glycerol-1-phosphate dehydrogenase family. Homodimer. The cofactor is Ni(2+).

It localises to the cytoplasm. It carries out the reaction sn-glycerol 1-phosphate + NAD(+) = dihydroxyacetone phosphate + NADH + H(+). It catalyses the reaction sn-glycerol 1-phosphate + NADP(+) = dihydroxyacetone phosphate + NADPH + H(+). Functionally, catalyzes the NAD(P)H-dependent reduction of dihydroxyacetonephosphate (DHAP or glycerone phosphate) to glycerol 1-phosphate (G1P). The G1P thus generated is probably used for the synthesis of phosphoglycerolipids in Gram-positive bacterial species. Prefers NADH over NADPH as coenzyme. Is also able to catalyze the reverse reaction, i.e. the NAD(+)-dependent oxidation of G1P but not of G3P. Does not possess glycerol dehydrogenase activity. This Bacillus subtilis (strain 168) protein is Glycerol-1-phosphate dehydrogenase [NAD(P)+] (egsA).